We begin with the raw amino-acid sequence, 82 residues long: MAAGSTGERPFFEIITSVRYWIIHAVTLPAIFIAGFLFVSTGLAYDAFGTPRPDTYFQASESKAPVVSQRFESKAQLDLRLK.

The chain crosses the membrane as a helical span at residues 22-36 (IIHAVTLPAIFIAGF). His24 contributes to the heme binding site.

It belongs to the PsbE/PsbF family. Heterodimer of an alpha subunit and a beta subunit. PSII is composed of 1 copy each of membrane proteins PsbA, PsbB, PsbC, PsbD, PsbE, PsbF, PsbH, PsbI, PsbJ, PsbK, PsbL, PsbM, PsbT, PsbX, PsbY, Psb30/Ycf12, peripheral proteins PsbO, CyanoQ (PsbQ), PsbU, PsbV and a large number of cofactors. It forms dimeric complexes. It depends on heme b as a cofactor.

It localises to the cellular thylakoid membrane. This b-type cytochrome is tightly associated with the reaction center of photosystem II (PSII). PSII is a light-driven water:plastoquinone oxidoreductase that uses light energy to abstract electrons from H(2)O, generating O(2) and a proton gradient subsequently used for ATP formation. It consists of a core antenna complex that captures photons, and an electron transfer chain that converts photonic excitation into a charge separation. The sequence is that of Cytochrome b559 subunit alpha from Prochlorococcus marinus (strain MIT 9211).